A 119-amino-acid chain; its full sequence is Ribonuclease P protein component (119 aa).

It belongs to the RnpA family. In terms of assembly, consists of a catalytic RNA component (M1 or rnpB) and a protein subunit.

It catalyses the reaction Endonucleolytic cleavage of RNA, removing 5'-extranucleotides from tRNA precursor.. RNaseP catalyzes the removal of the 5'-leader sequence from pre-tRNA to produce the mature 5'-terminus. It can also cleave other RNA substrates such as 4.5S RNA. The protein component plays an auxiliary but essential role in vivo by binding to the 5'-leader sequence and broadening the substrate specificity of the ribozyme. The sequence is that of Ribonuclease P protein component from Halalkalibacterium halodurans (strain ATCC BAA-125 / DSM 18197 / FERM 7344 / JCM 9153 / C-125) (Bacillus halodurans).